Reading from the N-terminus, the 598-residue chain is Dihydroxy-acid dehydratase astD, mitochondrial (598 aa).

Residues Met-1–Phe-111 constitute a mitochondrion transit peptide. The segment at Arg-23–Lys-50 is disordered. The span at Asn-40–Lys-50 shows a compositional bias: polar residues. Cys-86 is a [2Fe-2S] cluster binding site. Position 118 (Asp-118) interacts with Mg(2+). Residue Cys-159 participates in [2Fe-2S] cluster binding. Asp-160 contributes to the Mg(2+) binding site. Cys-232 serves as a coordination point for [2Fe-2S] cluster. A Mg(2+)-binding site is contributed by Glu-485. The active-site Proton acceptor is the Ser-511.

It belongs to the IlvD/Edd family. [2Fe-2S] cluster serves as cofactor. Requires Mg(2+) as cofactor.

Its subcellular location is the mitochondrion. It carries out the reaction (2R)-2,3-dihydroxy-3-methylbutanoate = 3-methyl-2-oxobutanoate + H2O. The enzyme catalyses (2R,3R)-2,3-dihydroxy-3-methylpentanoate = (S)-3-methyl-2-oxopentanoate + H2O. It functions in the pathway amino-acid biosynthesis; L-isoleucine biosynthesis; L-isoleucine from 2-oxobutanoate: step 3/4. It participates in amino-acid biosynthesis; L-valine biosynthesis; L-valine from pyruvate: step 3/4. Its activity is regulated as follows. DHAD activity is not inhibited by the dihydroxyacid dehydratase inhibitor aspterric acid (AA). Functionally, dihydroxyacid dehydratase; part of the gene cluster that mediates the biosynthesis of the sesquiterpenoid aspterric acid (AA), an inhibitor of dihydroxy-acid dehydratase (DHAD) effective as an herbicide. Performs the third step in the common pathway leading to biosynthesis of branched-chain amino acids. Catalyzes the dehydration of (2R,3R)-2,3-dihydroxy-3-methylpentanoate (2,3-dihydroxy-3-methylvalerate) into 2-oxo-3-methylpentanoate (2-oxo-3-methylvalerate) and of (2R)-2,3-dihydroxy-3-methylbutanoate (2,3-dihydroxyisovalerate) into 2-oxo-3-methylbutanoate (2-oxoisovalerate), the penultimate precursor to L-isoleucine and L-valine, respectively. AstD confers self-resistance in the presence of the dihydroxyacid dehydratase inhibitor aspterric acid (AA) produced by the ast cluster. This chain is Dihydroxy-acid dehydratase astD, mitochondrial, found in Aspergillus terreus (strain NIH 2624 / FGSC A1156).